The chain runs to 134 residues: Large-conductance mechanosensitive channel (134 aa).

2 helical membrane passes run 15-35 and 80-100; these read IDLA…QSVV and GNFI…FLAV.

It belongs to the MscL family. As to quaternary structure, homopentamer.

Its subcellular location is the cell inner membrane. In terms of biological role, channel that opens in response to stretch forces in the membrane lipid bilayer. May participate in the regulation of osmotic pressure changes within the cell. The protein is Large-conductance mechanosensitive channel of Methylocella silvestris (strain DSM 15510 / CIP 108128 / LMG 27833 / NCIMB 13906 / BL2).